Reading from the N-terminus, the 468-residue chain is ATP synthase subunit beta (468 aa).

ATP is bound at residue 148-155 (GGAGVGKT).

The protein belongs to the ATPase alpha/beta chains family. As to quaternary structure, F-type ATPases have 2 components, CF(1) - the catalytic core - and CF(0) - the membrane proton channel. CF(1) has five subunits: alpha(3), beta(3), gamma(1), delta(1), epsilon(1). CF(0) has three main subunits: a(1), b(2) and c(9-12). The alpha and beta chains form an alternating ring which encloses part of the gamma chain. CF(1) is attached to CF(0) by a central stalk formed by the gamma and epsilon chains, while a peripheral stalk is formed by the delta and b chains.

It localises to the cell inner membrane. The catalysed reaction is ATP + H2O + 4 H(+)(in) = ADP + phosphate + 5 H(+)(out). In terms of biological role, produces ATP from ADP in the presence of a proton gradient across the membrane. The catalytic sites are hosted primarily by the beta subunits. The protein is ATP synthase subunit beta of Xanthomonas campestris pv. campestris (strain B100).